We begin with the raw amino-acid sequence, 157 residues long: 2-C-methyl-D-erythritol 2,4-cyclodiphosphate synthase (157 aa).

A divalent metal cation is bound by residues aspartate 8 and histidine 10. 4-CDP-2-C-methyl-D-erythritol 2-phosphate contacts are provided by residues 8 to 10 and 34 to 35; these read DVH and HS. Histidine 42 contributes to the a divalent metal cation binding site. 4-CDP-2-C-methyl-D-erythritol 2-phosphate-binding positions include 56 to 58, 61 to 65, 100 to 106, 132 to 135, phenylalanine 139, and arginine 142; these read DIG, FPDTD, AQAPKMA, and TTSE.

It belongs to the IspF family. In terms of assembly, homotrimer. It depends on a divalent metal cation as a cofactor.

It carries out the reaction 4-CDP-2-C-methyl-D-erythritol 2-phosphate = 2-C-methyl-D-erythritol 2,4-cyclic diphosphate + CMP. It functions in the pathway isoprenoid biosynthesis; isopentenyl diphosphate biosynthesis via DXP pathway; isopentenyl diphosphate from 1-deoxy-D-xylulose 5-phosphate: step 4/6. Involved in the biosynthesis of isopentenyl diphosphate (IPP) and dimethylallyl diphosphate (DMAPP), two major building blocks of isoprenoid compounds. Catalyzes the conversion of 4-diphosphocytidyl-2-C-methyl-D-erythritol 2-phosphate (CDP-ME2P) to 2-C-methyl-D-erythritol 2,4-cyclodiphosphate (ME-CPP) with a corresponding release of cytidine 5-monophosphate (CMP). The chain is 2-C-methyl-D-erythritol 2,4-cyclodiphosphate synthase from Photobacterium profundum (strain SS9).